Reading from the N-terminus, the 633-residue chain is 1-deoxy-D-xylulose-5-phosphate synthase (633 aa).

Over residues 1 to 12 (MSEPTANLQPAS) the composition is skewed to polar residues. Residues 1–21 (MSEPTANLQPASRTPLLDRVN) form a disordered region. Residues H86 and 127-129 (GHA) contribute to the thiamine diphosphate site. D158 is a binding site for Mg(2+). Residues 159–160 (GS), N187, and E377 each bind thiamine diphosphate. N187 is a Mg(2+) binding site.

Belongs to the transketolase family. DXPS subfamily. As to quaternary structure, homodimer. Mg(2+) is required as a cofactor. Requires thiamine diphosphate as cofactor.

The catalysed reaction is D-glyceraldehyde 3-phosphate + pyruvate + H(+) = 1-deoxy-D-xylulose 5-phosphate + CO2. The protein operates within metabolic intermediate biosynthesis; 1-deoxy-D-xylulose 5-phosphate biosynthesis; 1-deoxy-D-xylulose 5-phosphate from D-glyceraldehyde 3-phosphate and pyruvate: step 1/1. Functionally, catalyzes the acyloin condensation reaction between C atoms 2 and 3 of pyruvate and glyceraldehyde 3-phosphate to yield 1-deoxy-D-xylulose-5-phosphate (DXP). This Deinococcus geothermalis (strain DSM 11300 / CIP 105573 / AG-3a) protein is 1-deoxy-D-xylulose-5-phosphate synthase.